Reading from the N-terminus, the 138-residue chain is ER-derived vesicles protein ERV14 (138 aa).

Over Gly2–Phe6 the chain is Cytoplasmic. A helical membrane pass occupies residues Ile7–Tyr27. Residues Ala28–Ala52 lie on the Extracellular side of the membrane. Residues Ala53–Leu73 form a helical membrane-spanning segment. The Cytoplasmic portion of the chain corresponds to Asn74–Lys111. Residues Leu112–Ala132 traverse the membrane as a helical segment. Over Glu133–Phe138 the chain is Extracellular.

This sequence belongs to the cornichon family.

Its subcellular location is the endoplasmic reticulum membrane. It is found in the golgi apparatus membrane. In terms of biological role, could regulate export of the bud site and axial growth sites selection protein AXL2 and possibly other secretory proteins from the endoplasmic reticulum in COPII-coated vesicles. Seems to be required for axial budding pattern in haploid cells. The chain is ER-derived vesicles protein ERV14 (ERV14) from Saccharomyces cerevisiae (strain ATCC 204508 / S288c) (Baker's yeast).